Consider the following 481-residue polypeptide: Bestrophin homolog 17 (481 aa).

The Cytoplasmic portion of the chain corresponds to 1-27 (MTVSYQLDVSSGNPLLFLRLLGRWRGS). A helical membrane pass occupies residues 28–48 (IWKSVVGDLFVWLLFYYAIYF). Residues 49-95 (AYRYAFSKQLQTVFEEISIHTDDRMKYLPLTFMLGFFVTTVFERWRS) lie on the Extracellular side of the membrane. The chain crosses the membrane as a helical span at residues 96–116 (ALNVMPFIESVALSVAVLLPG). At 117–230 (KGREDRLTRR…AMETLIKFDA (114 aa)) the chain is on the cytoplasmic side. Residues 231–251 (IPIPIAYPQVVFLAVRVYFAI) traverse the membrane as a helical segment. The Extracellular segment spans residues 252 to 274 (CLVSRQFLISDMKSKTQMDWPVP). The helical transmembrane segment at 275 to 295 (IMTVLEFIFVIGWMKVAEVLL) threads the bilayer. Topologically, residues 296 to 481 (NPLGEDDDDF…SSEESVDKKG (186 aa)) are cytoplasmic. Residues 427–481 (AGMLNKSTQPDRPTMETVSEEHEPSHFYRGDRVHSSDSGLSKTQQSSEESVDKKG) form a disordered region. Residues 445–461 (SEEHEPSHFYRGDRVHS) show a composition bias toward basic and acidic residues. Residues 462–474 (SDSGLSKTQQSSE) are compositionally biased toward polar residues.

It belongs to the anion channel-forming bestrophin (TC 1.A.46) family. Calcium-sensitive chloride channel subfamily. In terms of assembly, forms oligomers.

Its subcellular location is the cell membrane. Functionally, forms chloride channels. The protein is Bestrophin homolog 17 of Caenorhabditis elegans.